Reading from the N-terminus, the 661-residue chain is UvrABC system protein B (661 aa).

One can recognise a Helicase ATP-binding domain in the interval 25 to 182 (KGLNNKKRSQ…NDLVNLQYER (158 aa)). Residue 38 to 45 (GITGSGKT) participates in ATP binding. A Beta-hairpin motif is present at residues 91-114 (YYDYYQPEAYIPKTDVFIEKDSSI). The 163-residue stretch at 430–592 (QVEDLVGEIQ…IIPKTINRTI (163 aa)) folds into the Helicase C-terminal domain. Positions 621–656 (KAHIDKLRKEMLKAASNLEFEQAAKLRDQLKTLEEA) constitute a UVR domain.

It belongs to the UvrB family. As to quaternary structure, forms a heterotetramer with UvrA during the search for lesions. Interacts with UvrC in an incision complex.

Its subcellular location is the cytoplasm. The UvrABC repair system catalyzes the recognition and processing of DNA lesions. A damage recognition complex composed of 2 UvrA and 2 UvrB subunits scans DNA for abnormalities. Upon binding of the UvrA(2)B(2) complex to a putative damaged site, the DNA wraps around one UvrB monomer. DNA wrap is dependent on ATP binding by UvrB and probably causes local melting of the DNA helix, facilitating insertion of UvrB beta-hairpin between the DNA strands. Then UvrB probes one DNA strand for the presence of a lesion. If a lesion is found the UvrA subunits dissociate and the UvrB-DNA preincision complex is formed. This complex is subsequently bound by UvrC and the second UvrB is released. If no lesion is found, the DNA wraps around the other UvrB subunit that will check the other stand for damage. This Rickettsia bellii (strain OSU 85-389) protein is UvrABC system protein B.